The following is a 405-amino-acid chain: Imidazolonepropionase (405 aa).

Positions 72 and 74 each coordinate Fe(3+). Residues His72 and His74 each contribute to the Zn(2+) site. Residues Arg81, Tyr144, and His177 each coordinate 4-imidazolone-5-propanoate. Position 144 (Tyr144) interacts with N-formimidoyl-L-glutamate. His242 is a binding site for Fe(3+). His242 provides a ligand contact to Zn(2+). Residue Gln245 participates in 4-imidazolone-5-propanoate binding. Asp317 serves as a coordination point for Fe(3+). Asp317 lines the Zn(2+) pocket. The N-formimidoyl-L-glutamate site is built by Asn319 and Gly321. Thr322 serves as a coordination point for 4-imidazolone-5-propanoate.

The protein belongs to the metallo-dependent hydrolases superfamily. HutI family. Zn(2+) serves as cofactor. It depends on Fe(3+) as a cofactor.

It localises to the cytoplasm. The enzyme catalyses 4-imidazolone-5-propanoate + H2O = N-formimidoyl-L-glutamate. It functions in the pathway amino-acid degradation; L-histidine degradation into L-glutamate; N-formimidoyl-L-glutamate from L-histidine: step 3/3. In terms of biological role, catalyzes the hydrolytic cleavage of the carbon-nitrogen bond in imidazolone-5-propanoate to yield N-formimidoyl-L-glutamate. It is the third step in the universal histidine degradation pathway. This Erwinia tasmaniensis (strain DSM 17950 / CFBP 7177 / CIP 109463 / NCPPB 4357 / Et1/99) protein is Imidazolonepropionase.